The sequence spans 123 residues: U9-barytoxin-Tl1a (123 aa).

An N-terminal signal peptide occupies residues 1 to 18; it reads MNTMITFLVLFVLTAANG. Positions 19 to 77 are excised as a propeptide; that stretch reads APEANERKIPEAIHNEDQSLAEMAEELMFFLQQTEFEAPLLQEEEEAEXAEXRNSRERR. Disulfide bonds link cysteine 78–cysteine 93, cysteine 85–cysteine 98, and cysteine 92–cysteine 112.

Belongs to the neurotoxin 14 (magi-1) family. 05 (ICK-7) subfamily. ICK-7 sub-subfamily. Expressed by the venom gland.

It is found in the secreted. Functionally, ion channel inhibitor. The protein is U9-barytoxin-Tl1a of Trittame loki (Brush-footed trapdoor spider).